Reading from the N-terminus, the 207-residue chain is Outer-membrane lipoprotein LolB (207 aa).

An N-terminal signal peptide occupies residues 1-21; that stretch reads MPLPDFRLIRLLPLAALVLTA. The N-palmitoyl cysteine moiety is linked to residue cysteine 22. Cysteine 22 carries the S-diacylglycerol cysteine lipid modification.

The protein belongs to the LolB family. Monomer.

Its subcellular location is the cell outer membrane. Plays a critical role in the incorporation of lipoproteins in the outer membrane after they are released by the LolA protein. This chain is Outer-membrane lipoprotein LolB, found in Shigella boydii serotype 18 (strain CDC 3083-94 / BS512).